The following is a 69-amino-acid chain: uncharacterized protein (69 aa).

This is an uncharacterized protein from Saccharolobus islandicus (Sulfolobus islandicus).